The chain runs to 512 residues: Respiratory nitrate reductase 1 beta chain (512 aa).

4Fe-4S ferredoxin-type domains are found at residues 7–35, 175–206, and 208–237; these read VGMVLNLDKCIGCHTCSVTCKNVWTSREG, TFMMYLPRLCEHCLNPACVATCPSGAIYKREE, and GIVLIDQDKCRGWRMCITGCPYKKIYFNWK. [4Fe-4S] cluster contacts are provided by cysteine 16, cysteine 19, cysteine 22, cysteine 26, cysteine 184, cysteine 187, and cysteine 192. The [3Fe-4S] cluster site is built by cysteine 196, cysteine 217, and cysteine 223. [4Fe-4S] cluster-binding residues include cysteine 227, cysteine 244, cysteine 247, cysteine 259, and cysteine 263.

In terms of assembly, dimer of heterotrimers each composed of an alpha, a beta and a gamma chain. Alpha and beta are catalytic chains; gamma chains are involved in binding the enzyme complex to the cytoplasmic membrane. Requires [4Fe-4S] cluster as cofactor. It depends on [3Fe-4S] cluster as a cofactor.

Its subcellular location is the cell membrane. The catalysed reaction is nitrate + a quinol = a quinone + nitrite + H2O. In terms of biological role, the nitrate reductase enzyme complex allows S.flexneri to use nitrate as an electron acceptor during anaerobic growth. The beta chain is an electron transfer unit containing four cysteine clusters involved in the formation of iron-sulfur centers. Electrons are transferred from the gamma chain to the molybdenum cofactor of the alpha subunit. This is Respiratory nitrate reductase 1 beta chain (narH) from Shigella flexneri.